A 545-amino-acid polypeptide reads, in one-letter code: CTP synthase (545 aa).

An amidoligase domain region spans residues 1–266 (MTTNYIFVTG…DDYICKRFSL (266 aa)). S14 contacts CTP. Residue S14 coordinates UTP. ATP is bound by residues 15-20 (SLGKGI) and D72. The Mg(2+) site is built by D72 and E140. Residues 147 to 149 (DIE), 187 to 192 (KTKPTQ), and K223 each bind CTP. Residues 187–192 (KTKPTQ) and K223 contribute to the UTP site. Residue 239–241 (KDV) participates in ATP binding. Positions 291-542 (TIGMVGKYIE…VKAANEHQKR (252 aa)) constitute a Glutamine amidotransferase type-1 domain. G352 contributes to the L-glutamine binding site. C379 functions as the Nucleophile; for glutamine hydrolysis in the catalytic mechanism. L-glutamine contacts are provided by residues 380–383 (LGMQ), E403, and R470. Residues H515 and E517 contribute to the active site.

It belongs to the CTP synthase family. In terms of assembly, homotetramer.

The enzyme catalyses UTP + L-glutamine + ATP + H2O = CTP + L-glutamate + ADP + phosphate + 2 H(+). It catalyses the reaction L-glutamine + H2O = L-glutamate + NH4(+). The catalysed reaction is UTP + NH4(+) + ATP = CTP + ADP + phosphate + 2 H(+). It participates in pyrimidine metabolism; CTP biosynthesis via de novo pathway; CTP from UDP: step 2/2. With respect to regulation, allosterically activated by GTP, when glutamine is the substrate; GTP has no effect on the reaction when ammonia is the substrate. The allosteric effector GTP functions by stabilizing the protein conformation that binds the tetrahedral intermediate(s) formed during glutamine hydrolysis. Inhibited by the product CTP, via allosteric rather than competitive inhibition. Catalyzes the ATP-dependent amination of UTP to CTP with either L-glutamine or ammonia as the source of nitrogen. Regulates intracellular CTP levels through interactions with the four ribonucleotide triphosphates. This is CTP synthase from Salmonella paratyphi A (strain ATCC 9150 / SARB42).